The following is a 433-amino-acid chain: Gamma-glutamyl phosphate reductase (433 aa).

Belongs to the gamma-glutamyl phosphate reductase family.

The protein localises to the cytoplasm. It catalyses the reaction L-glutamate 5-semialdehyde + phosphate + NADP(+) = L-glutamyl 5-phosphate + NADPH + H(+). It participates in amino-acid biosynthesis; L-proline biosynthesis; L-glutamate 5-semialdehyde from L-glutamate: step 2/2. Functionally, catalyzes the NADPH-dependent reduction of L-glutamate 5-phosphate into L-glutamate 5-semialdehyde and phosphate. The product spontaneously undergoes cyclization to form 1-pyrroline-5-carboxylate. The protein is Gamma-glutamyl phosphate reductase of Rhodopseudomonas palustris (strain BisB18).